The primary structure comprises 266 residues: GTP-binding protein Rhes (266 aa).

26–33 (GASRVGKS) contacts GTP. Residues 48–56 (YTPTIEDFH) carry the Effector region motif. GTP contacts are provided by residues 73–77 (DTSGN) and 140–143 (NKND). The interval 189–235 (MAKLPHEMSPALHRKISVQYGDAFHPRPFCMRRVKEMDAYGMVSPFA) is interaction with GNB1, GNB2 and GNB3. A Cysteine methyl ester modification is found at cysteine 263. Cysteine 263 is lipidated: S-farnesyl cysteine. A propeptide spans 264–266 (TIQ) (removed in mature form).

It belongs to the small GTPase superfamily. RasD family. Monomer (Potential). Interacts with PIK3CA and UBE2I. Interacts with GNB1, GNB2 and GNB3. Interacts with HTT; interacts with mutant HTT (mHTT) with a much higher affinity than wild type HTT. Post-translationally, farnesylated. Farnesylation is required for membrane targeting. In terms of tissue distribution, pancreatic endocrine cells (islets of Langerhans).

It is found in the cell membrane. Functionally, GTPase signaling protein that binds to and hydrolyzes GTP. Regulates signaling pathways involving G-proteins-coupled receptor and heterotrimeric proteins such as GNB1, GNB2 and GNB3. May be involved in selected striatal competencies, mainly locomotor activity and motor coordination. This is GTP-binding protein Rhes (RASD2) from Homo sapiens (Human).